The sequence spans 193 residues: FMN-dependent NADH:quinone oxidoreductase 1 (193 aa).

FMN contacts are provided by residues serine 9, 15-17 (SIS), and 85-88 (MYNF).

Belongs to the azoreductase type 1 family. Homodimer. The cofactor is FMN.

It catalyses the reaction 2 a quinone + NADH + H(+) = 2 a 1,4-benzosemiquinone + NAD(+). The enzyme catalyses N,N-dimethyl-1,4-phenylenediamine + anthranilate + 2 NAD(+) = 2-(4-dimethylaminophenyl)diazenylbenzoate + 2 NADH + 2 H(+). In terms of biological role, quinone reductase that provides resistance to thiol-specific stress caused by electrophilic quinones. Also exhibits azoreductase activity. Catalyzes the reductive cleavage of the azo bond in aromatic azo compounds to the corresponding amines. This chain is FMN-dependent NADH:quinone oxidoreductase 1, found in Xanthomonas axonopodis pv. citri (strain 306).